Reading from the N-terminus, the 557-residue chain is Carboxypeptidase Y homolog A (557 aa).

An N-terminal signal peptide occupies residues 1 to 17 (MRVLPAAMLVGAATAAV). Residues 18–138 (PPFQQVLGGN…KLEAYDLRVK (121 aa)) constitute a propeptide that is removed on maturation. Disulfide bonds link C193-C433, C327-C341, C351-C374, C358-C367, and C396-C403. The N-linked (GlcNAc...) asparagine glycan is linked to N224. S280 is a catalytic residue. The active site involves D472. N523 is a glycosylation site (N-linked (GlcNAc...) asparagine). Residue H534 is part of the active site.

This sequence belongs to the peptidase S10 family.

It localises to the vacuole. The enzyme catalyses Release of a C-terminal amino acid with broad specificity.. Functionally, vacuolar carboxypeptidase involved in degradation of small peptides. Digests preferentially peptides containing an aliphatic or hydrophobic residue in P1' position, as well as methionine, leucine or phenylalanine in P1 position of ester substrate. The protein is Carboxypeptidase Y homolog A (cpyA) of Aspergillus niger (strain ATCC MYA-4892 / CBS 513.88 / FGSC A1513).